The sequence spans 310 residues: N-acetyl-gamma-glutamyl-phosphate reductase (310 aa).

The active site involves Cys117.

The protein belongs to the NAGSA dehydrogenase family. Type 2 subfamily.

It localises to the cytoplasm. The enzyme catalyses N-acetyl-L-glutamate 5-semialdehyde + phosphate + NADP(+) = N-acetyl-L-glutamyl 5-phosphate + NADPH + H(+). It participates in amino-acid biosynthesis; L-arginine biosynthesis; N(2)-acetyl-L-ornithine from L-glutamate: step 3/4. Its function is as follows. Catalyzes the NADPH-dependent reduction of N-acetyl-5-glutamyl phosphate to yield N-acetyl-L-glutamate 5-semialdehyde. The sequence is that of N-acetyl-gamma-glutamyl-phosphate reductase from Rhizobium rhizogenes (strain K84 / ATCC BAA-868) (Agrobacterium radiobacter).